The primary structure comprises 636 residues: MDSSSESYHKIEVIYLLSKGAEQDDHPHMIQVQYPSHQHAPTLRDVKFRLTALRGRGMPDSYSWSYKRSYKGTFIWCDVFDGDDILPLSESGEYVLKALEVMDSSEDACDRGVEHLGQEVARVLPTNRNGTSANFNEVHSIDDVRRVAPNKCVEVKRQFMGGSVHNNMTGKANRNEQGDAYGTTSRVPDPENCIENKRCLESMTGSDSSRSNISTDESYGLSFERDLKMDMKEMPACPATRSTDHGGMSSLAPRSSRLSRREYVKCKTWAVKEDENAALNHGRLSRRSSDTLRDSNSVGNTVDIPSSPVTRPCFPGDPLIFMLKKATKFHRSQLCRKAEVEGSPCATVGKPSSSRHTSKIRHGSGPLKAYHGPHSSKSATQNSRPVTYETSAKESERDIRSLCQFLGASNVGSVSQTINKEGTKKTGSARHIQAGSNDDFDFARHKEVAVDISEKLLLPEQVTGRYEKPSRMSKQLINKLDSKSLNMVTRPAVRLSSKLGSGQASESFSPASPHAPQRPIVSRPQEKAVNQLSLVAGFEDPQITSSDTSNAGLSCTSKASGLKAVKLPRNASNNCYFSLTIPDLEKRAADTKVYPWRENSAFNSIELYSGTLQKVDLAINTSFNGATLGELASGGC.

Residues 9–103 (HKIEVIYLLS…YVLKALEVMD (95 aa)) form a DIX-like oligomerization domain region. Disordered stretches follow at residues 164–188 (VHNN…SRVP), 281–304 (HGRL…TVDI), 340–393 (VEGS…TSAK), and 499–524 (LGSG…VSRP). 2 stretches are compositionally biased toward polar residues: residues 375-390 (SSKS…TYET) and 499-510 (LGSGQASESFSP).

The protein belongs to the SOSEKI family. Homodimer. Forms long polymer filaments with other SOKs proteins polymers crucial for polar localization and biological activity.

It localises to the cell membrane. In terms of biological role, SOSEKI proteins locally interpret global polarity cues and can influence cell division orientation to coordinate cell polarization relative to body axes. In Physcomitrium patens (Spreading-leaved earth moss), this protein is Protein SOSEKI 2.